The following is a 497-amino-acid chain: Cytochrome P450 2D19 (497 aa).

Cys-443 serves as a coordination point for heme.

Belongs to the cytochrome P450 family. The cofactor is heme.

The protein resides in the endoplasmic reticulum membrane. The protein localises to the microsome membrane. It catalyses the reaction an organic molecule + reduced [NADPH--hemoprotein reductase] + O2 = an alcohol + oxidized [NADPH--hemoprotein reductase] + H2O + H(+). Functionally, responsible for the metabolism of many drugs and environmental chemicals that it oxidizes. This Callithrix jacchus (White-tufted-ear marmoset) protein is Cytochrome P450 2D19 (CYP2D19).